The following is a 357-amino-acid chain: S-adenosylmethionine decarboxylase proenzyme (357 aa).

Active-site residues include E11 and E14. The Schiff-base intermediate with substrate; via pyruvic acid role is filled by S71. At S71 the chain carries Pyruvic acid (Ser); by autocatalysis. The active-site Proton donor; for catalytic activity is the C85. Active-site proton acceptor; for processing activity residues include S234 and H247.

This sequence belongs to the eukaryotic AdoMetDC family. It depends on pyruvate as a cofactor. Post-translationally, is synthesized initially as an inactive proenzyme. Formation of the active enzyme involves a self-maturation process in which the active site pyruvoyl group is generated from an internal serine residue via an autocatalytic post-translational modification. Two non-identical subunits are generated from the proenzyme in this reaction, and the pyruvate is formed at the N-terminus of the alpha chain, which is derived from the carboxyl end of the proenzyme. The post-translation cleavage follows an unusual pathway, termed non-hydrolytic serinolysis, in which the side chain hydroxyl group of the serine supplies its oxygen atom to form the C-terminus of the beta chain, while the remainder of the serine residue undergoes an oxidative deamination to produce ammonia and the pyruvoyl group blocking the N-terminus of the alpha chain.

The enzyme catalyses S-adenosyl-L-methionine + H(+) = S-adenosyl 3-(methylsulfanyl)propylamine + CO2. It participates in amine and polyamine biosynthesis; S-adenosylmethioninamine biosynthesis; S-adenosylmethioninamine from S-adenosyl-L-methionine: step 1/1. This chain is S-adenosylmethionine decarboxylase proenzyme (SAMDC), found in Catharanthus roseus (Madagascar periwinkle).